The sequence spans 189 residues: Small ribosomal subunit protein uS5 (189 aa).

An S5 DRBM domain is found at 22-85; sequence FVDKLVAINR…EAAKRDLIFV (64 aa).

This sequence belongs to the universal ribosomal protein uS5 family. As to quaternary structure, part of the 30S ribosomal subunit. Contacts proteins S4 and S8.

Its function is as follows. With S4 and S12 plays an important role in translational accuracy. Located at the back of the 30S subunit body where it stabilizes the conformation of the head with respect to the body. The protein is Small ribosomal subunit protein uS5 of Sinorhizobium medicae (strain WSM419) (Ensifer medicae).